Here is a 188-residue protein sequence, read N- to C-terminus: Elongation factor P 1 (188 aa).

The protein belongs to the elongation factor P family.

Its subcellular location is the cytoplasm. It functions in the pathway protein biosynthesis; polypeptide chain elongation. Involved in peptide bond synthesis. Stimulates efficient translation and peptide-bond synthesis on native or reconstituted 70S ribosomes in vitro. Probably functions indirectly by altering the affinity of the ribosome for aminoacyl-tRNA, thus increasing their reactivity as acceptors for peptidyl transferase. This is Elongation factor P 1 from Mesorhizobium japonicum (strain LMG 29417 / CECT 9101 / MAFF 303099) (Mesorhizobium loti (strain MAFF 303099)).